A 171-amino-acid chain; its full sequence is Protein phosphatase 1 regulatory subunit 1A (171 aa).

Met1 is subject to N-acetylmethionine. Residues Lys9–Phe12 form an essential for activity region. Residues Leu17–Val171 are disordered. The segment covering Pro19 to Ile29 has biased composition (basic and acidic residues). Thr35 is subject to Phosphothreonine; by PKA. Residues Thr42 to Arg54 form an essential for activity region. Phosphoserine is present on residues Ser43, Ser46, Ser47, and Ser67. Residues Gly122 to Ala133 show a composition bias toward polar residues. Over residues Ala137–Gly148 the composition is skewed to basic and acidic residues. An interaction with PPP1R15A region spans residues Thr143–Val171.

It belongs to the protein phosphatase inhibitor 1 family. Interacts with PPP1R15A. Post-translationally, phosphorylation of Thr-35 is required for activity.

In terms of biological role, inhibitor of protein-phosphatase 1. This protein may be important in hormonal control of glycogen metabolism. Hormones that elevate intracellular cAMP increase I-1 activity in many tissues. I-1 activation may impose cAMP control over proteins that are not directly phosphorylated by PKA. Following a rise in intracellular calcium, I-1 is inactivated by calcineurin (or PP2B). Does not inhibit type-2 phosphatases. This is Protein phosphatase 1 regulatory subunit 1A (Ppp1r1a) from Rattus norvegicus (Rat).